Here is a 47-residue protein sequence, read N- to C-terminus: Potamin-1 (47 aa).

3 disulfides stabilise this stretch: Cys3–Cys40, Cys6–Cys24, and Cys7–Cys36.

Inhibitor of serine proteases chymotrypsin, papain and trypsin. Has strong antifungal activity against C.albicans and R.solani. Has antibacterial activity against the Gram-positive bacterium C.michiganense, but lacks antibacterial activity against the Gram-positive bacterium S.aureus. Lacks hemolytic activity against human erythrocytes. The protein is Potamin-1 of Solanum tuberosum (Potato).